The following is a 214-amino-acid chain: Thymidylate kinase (214 aa).

12-19 is an ATP binding site; sequence GGEGAGKS.

It belongs to the thymidylate kinase family.

It catalyses the reaction dTMP + ATP = dTDP + ADP. Functionally, phosphorylation of dTMP to form dTDP in both de novo and salvage pathways of dTTP synthesis. This Gluconobacter oxydans (strain 621H) (Gluconobacter suboxydans) protein is Thymidylate kinase.